Reading from the N-terminus, the 281-residue chain is Pantothenate synthetase (281 aa).

30 to 37 (MGNLHQGH) contributes to the ATP binding site. His37 serves as the catalytic Proton donor. Gln61 contributes to the (R)-pantoate binding site. Gln61 is a beta-alanine binding site. An ATP-binding site is contributed by 149–152 (GNKD). Residue Gln155 participates in (R)-pantoate binding. Residues Ile178 and 186–189 (MSSR) each bind ATP.

The protein belongs to the pantothenate synthetase family. In terms of assembly, homodimer.

The protein localises to the cytoplasm. It carries out the reaction (R)-pantoate + beta-alanine + ATP = (R)-pantothenate + AMP + diphosphate + H(+). It functions in the pathway cofactor biosynthesis; (R)-pantothenate biosynthesis; (R)-pantothenate from (R)-pantoate and beta-alanine: step 1/1. Its function is as follows. Catalyzes the condensation of pantoate with beta-alanine in an ATP-dependent reaction via a pantoyl-adenylate intermediate. This is Pantothenate synthetase from Shewanella baltica (strain OS155 / ATCC BAA-1091).